The following is a 500-amino-acid chain: Histidine ammonia-lyase (500 aa).

Residues 142–144 constitute a cross-link (5-imidazolinone (Ala-Gly)); that stretch reads ASG. A 2,3-didehydroalanine (Ser) modification is found at serine 143.

The protein belongs to the PAL/histidase family. Post-translationally, contains an active site 4-methylidene-imidazol-5-one (MIO), which is formed autocatalytically by cyclization and dehydration of residues Ala-Ser-Gly.

It is found in the cytoplasm. The enzyme catalyses L-histidine = trans-urocanate + NH4(+). The protein operates within amino-acid degradation; L-histidine degradation into L-glutamate; N-formimidoyl-L-glutamate from L-histidine: step 1/3. The protein is Histidine ammonia-lyase of Macrococcus caseolyticus (strain JCSC5402) (Macrococcoides caseolyticum).